The chain runs to 293 residues: Ribosomal protein L11 methyltransferase (293 aa).

4 residues coordinate S-adenosyl-L-methionine: T145, G166, D188, and N230.

The protein belongs to the methyltransferase superfamily. PrmA family.

It is found in the cytoplasm. The enzyme catalyses L-lysyl-[protein] + 3 S-adenosyl-L-methionine = N(6),N(6),N(6)-trimethyl-L-lysyl-[protein] + 3 S-adenosyl-L-homocysteine + 3 H(+). Functionally, methylates ribosomal protein L11. In Shewanella pealeana (strain ATCC 700345 / ANG-SQ1), this protein is Ribosomal protein L11 methyltransferase.